The following is a 157-amino-acid chain: Small ribosomal subunit protein uS7 (157 aa).

Belongs to the universal ribosomal protein uS7 family. As to quaternary structure, part of the 30S ribosomal subunit. Contacts proteins S9 and S11.

Its function is as follows. One of the primary rRNA binding proteins, it binds directly to 16S rRNA where it nucleates assembly of the head domain of the 30S subunit. Is located at the subunit interface close to the decoding center, probably blocks exit of the E-site tRNA. This chain is Small ribosomal subunit protein uS7, found in Francisella tularensis subsp. tularensis (strain FSC 198).